Here is an 82-residue protein sequence, read N- to C-terminus: uncharacterized protein (82 aa).

3 helical membrane passes run 1-21, 22-42, and 62-82; these read MSASKILVGCWLGLAVLSVST, VLLGNAGATLALAAGVLLAAF, and WRLLLLGWPLLMAIGVLLTLL.

The protein localises to the cell membrane. This is an uncharacterized protein from Stutzerimonas stutzeri (Pseudomonas stutzeri).